We begin with the raw amino-acid sequence, 199 residues long: MSEEQILNTHNASILLSAANKSHYPQDDLPEIALAGRSNVGKSSFINTILGRKSLARTSSKPGKTQLLNFFNVDDKLRLVDVPGYGYAKVSKAERARWGKMIEEYLTTRQNLRAVVSLVDFRHEPSQDDIQMYEFLKYYEIPVIIVATKADKVPRGRWNKHESMVKKSLNFDQTDAFIIFSSVERIGIDESWDTILEYL.

The EngB-type G domain maps to 28–199 (DLPEIALAGR…ESWDTILEYL (172 aa)). GTP-binding positions include 36–43 (GRSNVGKS), 63–67 (GKTQL), 81–84 (DVPG), 148–151 (TKAD), and 180–182 (FSS). Ser-43 and Thr-65 together coordinate Mg(2+).

Belongs to the TRAFAC class TrmE-Era-EngA-EngB-Septin-like GTPase superfamily. EngB GTPase family. Requires Mg(2+) as cofactor.

Necessary for normal cell division and for the maintenance of normal septation. This chain is Probable GTP-binding protein EngB, found in Streptococcus equi subsp. zooepidemicus (strain H70).